We begin with the raw amino-acid sequence, 689 residues long: Transcription factor MYC2 (689 aa).

A JAZ-interaction domain region spans residues 94-172 (LQQRLQALID…VLRELNSLIS (79 aa)). The segment covering 316–349 (NTVQTNSVPSSNSNKQIAYGNENNHPSGNGQSCY) has biased composition (polar residues). Disordered regions lie at residues 316–361 (NTVQ…PQQQ) and 420–519 (QSQF…EAER). The span at 350 to 361 (NQQQQKNPPQQQ) shows a compositional bias: low complexity. A compositionally biased stretch (basic and acidic residues) spans 471 to 495 (DSEHSDLEASVVKEADSSRVVEPEK). The span at 496–505 (RPRKRGRKPA) shows a compositional bias: basic residues. The segment covering 506 to 519 (NGREEPLNHVEAER) has biased composition (basic and acidic residues). Positions 509 to 522 (EEPLNHVEAERQRR) are basic motif; degenerate. One can recognise a bHLH domain in the interval 509-558 (EEPLNHVEAERQRREKLNQRFYALRAVVPNVSKMDKASLLGDAISYINEL). Residues 523–558 (EKLNQRFYALRAVVPNVSKMDKASLLGDAISYINEL) form a helix-loop-helix motif region. Residues 563-602 (QNTESDKEDLKSQIEDLKKESRRPGPPPPPNQDLKMSSHT) form a disordered region. The segment covering 566 to 585 (ESDKEDLKSQIEDLKKESRR) has biased composition (basic and acidic residues).

Interacts (via N-terminus) with MED25. Interacts (via N-terminus) with JAZ7. MED25 and JAZ7 compete with each other to bind to MYC2. Interacts (via N-terminus) with MTB1. MTB1 and MED25 compete with each other to bind to MYC2. As to expression, expressed at low levels in roots, stems, leaves, flowers and fruits.

The protein localises to the nucleus. Transcriptional activator that binds to the G-box motif (5'-AACGTG-3') found in the promoter of the jasmonate-induced gene LAPA1. Acts as a negative regulator of blue light-mediated photomorphogenesis and positively regulates root growth. Promotes growth in response to the phytohormones abscisic acid (ABA) and jasmonate (JA). Binds to the G-box motif (5'-CACGTG-3') of the RBCS-3A gene promoter. Acts downstream of the jasmonate (JA) receptor to orchestrate JA-mediated activation of plant responses. Positively regulates both wound-responsive and pathogen-responsive genes through MYC2-targeted transcription factors (MTFs) involved in early response to JA. With JA2L forms a transcription module that regulates wounding-responsive genes. With ERF.C3 forms a transcription module that regulates pathogen-responsive genes. Plays a critical role in orchestrating JA-mediated defense gene expression during Botrytis cinerea infection. Negatively regulates defense responses to root-knot nematodes, potentially by mediating crosstalk among the hormones strigolactones, abscisic acid (ABA) and jasmonate (JA). Regulates the termination of JA-mediated defense responses by specifically binding the G-box (5'-CACATG-3') motifs in the promoters of MTB1, MTB2 and MTB3, which are transcription factors that negatively regulates JA signaling. May be involved in JA-induced chilling tolerance, possibly by ameliorating the antioxidant enzyme system of fruit and increasing proline and lycopene levels. This chain is Transcription factor MYC2, found in Solanum lycopersicum (Tomato).